Consider the following 279-residue polypeptide: Glycerol uptake facilitator protein (279 aa).

The Cytoplasmic portion of the chain corresponds to 1 to 8 (MTTAAPTP). Residues 9-37 (SLFGQCLAEFLGTALLIFFGTGCVAALKV) form a helical membrane-spanning segment. The Periplasmic segment spans residues 38 to 42 (AGASF). The helical transmembrane segment at 43–63 (GLWEISIIWGVGVSMAIYLSA) threads the bilayer. Residues 64–66 (GVS) lie on the Cytoplasmic side of the membrane. Residues 67–70 (GAHL) lie within the membrane without spanning it. The NPA 1 motif lies at 71–73 (NPA). An intramembrane region (helical) is located at residues 71-81 (NPAVSIALWLF). The Cytoplasmic portion of the chain corresponds to 82 to 87 (AGFEGR). The chain crosses the membrane as a helical span at residues 88-111 (KLPFYITAQVAGAFCAAALVYTLY). At 112 to 146 (SSLFIEFEQAQNIVRGSQDSLALASVFSTYPHPAL) the chain is on the periplasmic side. The helical transmembrane segment at 147 to 172 (SVGQAFLVEVVITAILMAVIMALTDD) threads the bilayer. Residues 173 to 180 (GNGLPRGP) lie on the Cytoplasmic side of the membrane. A helical transmembrane segment spans residues 181–197 (LAPLLIGLLIAVIGSAM). Topologically, residues 198–201 (GPLT) are periplasmic. The stretch at 202–205 (GFAM) is an intramembrane region. Positions 206–208 (NPA) match the NPA 2 motif. The segment at residues 206 to 219 (NPARDFGPKLMTYL) is an intramembrane region (helical). The Periplasmic segment spans residues 220–234 (AGWGPIAFTGGREIP). A helical membrane pass occupies residues 235 to 257 (YFLVPIFAPILGACLGAGGYRVL). Topologically, residues 258–279 (IARHLPSAAAPAEAEPEKVRAS) are cytoplasmic.

This sequence belongs to the MIP/aquaporin (TC 1.A.8) family.

The protein resides in the cell inner membrane. The catalysed reaction is glycerol(in) = glycerol(out). In terms of biological role, mediates glycerol diffusion across the cytoplasmic membrane via a pore-type mechanism. In Pseudomonas aeruginosa (strain ATCC 15692 / DSM 22644 / CIP 104116 / JCM 14847 / LMG 12228 / 1C / PRS 101 / PAO1), this protein is Glycerol uptake facilitator protein (glpF).